The sequence spans 87 residues: MNQEEKKKIIEQFRINEKDTGSAEVQVAILTARIRHLTEHLKAHPKDFHSRRGLMKMVGRRRKLLRYLRKSNPESYKSLIEKLNLRG.

Belongs to the universal ribosomal protein uS15 family. In terms of assembly, part of the 30S ribosomal subunit. Forms a bridge to the 50S subunit in the 70S ribosome, contacting the 23S rRNA.

One of the primary rRNA binding proteins, it binds directly to 16S rRNA where it helps nucleate assembly of the platform of the 30S subunit by binding and bridging several RNA helices of the 16S rRNA. Its function is as follows. Forms an intersubunit bridge (bridge B4) with the 23S rRNA of the 50S subunit in the ribosome. The polypeptide is Small ribosomal subunit protein uS15 (Pseudothermotoga lettingae (strain ATCC BAA-301 / DSM 14385 / NBRC 107922 / TMO) (Thermotoga lettingae)).